The chain runs to 144 residues: NADPH-dependent 7-cyano-7-deazaguanine reductase (144 aa).

Residues 1 to 21 (MSQSPIQNPTSDPNAQSVQET) show a composition bias toward polar residues. Positions 1-27 (MSQSPIQNPTSDPNAQSVQETSESKYG) are disordered. The active-site Thioimide intermediate is the Cys-61. Asp-68 functions as the Proton donor in the catalytic mechanism. Residues 83 to 85 (VEL) and 102 to 103 (HE) each bind substrate.

This sequence belongs to the GTP cyclohydrolase I family. QueF type 1 subfamily.

The protein resides in the cytoplasm. It carries out the reaction 7-aminomethyl-7-carbaguanine + 2 NADP(+) = 7-cyano-7-deazaguanine + 2 NADPH + 3 H(+). It functions in the pathway tRNA modification; tRNA-queuosine biosynthesis. Catalyzes the NADPH-dependent reduction of 7-cyano-7-deazaguanine (preQ0) to 7-aminomethyl-7-deazaguanine (preQ1). This Acaryochloris marina (strain MBIC 11017) protein is NADPH-dependent 7-cyano-7-deazaguanine reductase.